The following is a 706-amino-acid chain: Choline transporter-like protein 2 (706 aa).

The Cytoplasmic portion of the chain corresponds to 1 to 33 (MGKEQQLYYGKHGTPQKYDPAFRGPIYNRGCTD). Phosphothreonine is present on T14. A helical membrane pass occupies residues 34 to 54 (IICCVFLFLAIVGYVAVGIIA). Over 55–232 (WTHGDPRKVI…RIFEDYTVSW (178 aa)) the chain is Extracellular. 2 N-linked (GlcNAc...) asparagine glycosylation sites follow: N187 and N200. A helical transmembrane segment spans residues 233–253 (YWIIIGLIIAMVLSLLFIILL). The Cytoplasmic segment spans residues 254–256 (RFL). A helical transmembrane segment spans residues 257–277 (AGIMVWVMIVMVILVLGYGIL). At 278–315 (HCYMEYARLRGEAGSDVSLVDLGFQTDFRVYLHLRQTW) the chain is on the extracellular side. The chain crosses the membrane as a helical span at residues 316 to 336 (VAFMIILSIVEVIIILLLIFL). Over 337–364 (RKRILIAIALIKEASRAVGYVMCSLLYP) the chain is Cytoplasmic. The helical transmembrane segment at 365–385 (LVTFFLLCLCIAYWASTAIFL) threads the bilayer. Topologically, residues 386-457 (STSNEAVYKI…FNVFMFFWLA (72 aa)) are extracellular. N-linked (GlcNAc...) asparagine glycosylation is found at N397 and N417. Residues 458-480 (NFVLALGQVTLAGAFASYYWAMN) form a helical membrane-spanning segment. Over 481–504 (KPDDLPAFPLFSAFGRALRYHTGS) the chain is Cytoplasmic. The chain crosses the membrane as a helical span at residues 505–525 (LAFGSLLLAIVQVIRVILEYL). Over 526 to 563 (DQRLKAAENKFAKFLMSCLKCCFWCLEKFIKFLNRNAY) the chain is Extracellular. The chain crosses the membrane as a helical span at residues 564-584 (IMIAIYGTNFCTSARNAFFLL). The Cytoplasmic segment spans residues 585 to 599 (MRNIIRVAVLDKVTD). Residues 600–620 (FLFLLGKLLIVGSVGILAFFF) traverse the membrane as a helical segment. Topologically, residues 621 to 638 (FTHRIRIVQDTAPSLNYY) are extracellular. A helical transmembrane segment spans residues 639–659 (WVPVVTVVIGSYLIAHGFFSV). Residues 660-706 (YGMCVDTLFLCFLEDLERNDGTPERPYFMSLTLKKILNKTNKRQAEA) lie on the Cytoplasmic side of the membrane.

This sequence belongs to the CTL (choline transporter-like) family. As to quaternary structure, interacts with COCH. In terms of processing, N-glycosylated.

The protein localises to the cell membrane. It localises to the mitochondrion outer membrane. It carries out the reaction choline(out) + n H(+)(in) = choline(in) + n H(+)(out). The enzyme catalyses ethanolamine(out) + n H(+)(in) = ethanolamine(in) + n H(+)(out). Functionally, choline/H+ antiporter, mainly in mitochodria. Also acts as a low-affinity ethanolamine/H+ antiporter, regulating the supply of extracellular ethanolamine (Etn) for the CDP-Etn pathway, redistribute intracellular Etn and balance the CDP-Cho and CDP-Etn arms of the Kennedy pathway. In Bos taurus (Bovine), this protein is Choline transporter-like protein 2 (SLC44A2).